The sequence spans 138 residues: Cysteine desulfuration protein SufE (138 aa).

Cys51 (cysteine persulfide intermediate) is an active-site residue.

This sequence belongs to the SufE family. In terms of assembly, homodimer. Interacts with SufS.

The protein resides in the cytoplasm. It functions in the pathway cofactor biosynthesis; iron-sulfur cluster biosynthesis. Functionally, participates in cysteine desulfuration mediated by SufS. Cysteine desulfuration mobilizes sulfur from L-cysteine to yield L-alanine and constitutes an essential step in sulfur metabolism for biosynthesis of a variety of sulfur-containing biomolecules. Functions as a sulfur acceptor for SufS, by mediating the direct transfer of the sulfur atom from the S-sulfanylcysteine of SufS, an intermediate product of cysteine desulfuration process. The sequence is that of Cysteine desulfuration protein SufE from Pectobacterium carotovorum subsp. carotovorum (strain PC1).